The following is a 325-amino-acid chain: H-2 class I histocompatibility antigen, Q10 alpha chain (325 aa).

The N-terminal stretch at 1-24 is a signal peptide; the sequence is MGAMAPRTLLLLLAAALAPTQTQA. Residues 25 to 114 are alpha-1; it reads GSHSMRYFET…LLGYYNQSES (90 aa). At 25–310 the chain is on the extracellular side; that stretch reads GSHSMRYFET…PPSTDSIMSH (286 aa). Residue asparagine 110 is glycosylated (N-linked (GlcNAc...) asparagine). The segment at 115–206 is alpha-2; it reads GSHTIQWMYG…ELGKETLLRT (92 aa). 2 cysteine pairs are disulfide-bonded: cysteine 125/cysteine 188 and cysteine 227/cysteine 283. An alpha-3 region spans residues 207-298; that stretch reads DPPKTHVTHH…GLPEPLTLRW (92 aa). Residues 209–297 form the Ig-like C1-type domain; it reads PKTHVTHHPG…EGLPEPLTLR (89 aa). An N-linked (GlcNAc...) asparagine glycan is attached at asparagine 280. Residues 299 to 310 are connecting peptide; sequence EPPPSTDSIMSH. A helical transmembrane segment spans residues 311 to 324; the sequence is IADLLWPSLKLWWY.

Belongs to the MHC class I family. In terms of assembly, heterodimer of an alpha chain and a beta chain (beta-2-microglobulin).

It is found in the membrane. In terms of biological role, involved in the presentation of foreign antigens to the immune system. This chain is H-2 class I histocompatibility antigen, Q10 alpha chain (H2-Q10), found in Mus musculus (Mouse).